We begin with the raw amino-acid sequence, 303 residues long: MFVQILGSAAGGGFPQWNCNCVNCAGFRDGSLRAQARTQSSIAISDDGVNWVLCNASPDIRAQLQGFAPMQPGRALRDTGISAIILMDSQIDHTTGLLSLREGCPHQVWCTDMVHEDLSTGFPLFTMLTHWNGGLAWNRIELDASFTIPACPNLRFTPLPLRSAAPPYSPHRFDPHPGDNIGLIVEDLRTGGKLFYAPGLGKVDAPLLEIMAGSDCLLVDGTMWDDDEMQRRGVGTRTGREMGHLAQNGPGGMLDVLEQLPEQRKVLIHINNTNPILDEDSPERAELVRRNVEVAYDGMSIEL.

This sequence belongs to the PqqB family.

It functions in the pathway cofactor biosynthesis; pyrroloquinoline quinone biosynthesis. May be involved in the transport of PQQ or its precursor to the periplasm. The chain is Coenzyme PQQ synthesis protein B from Pseudomonas fluorescens (strain SBW25).